The sequence spans 432 residues: MSIITDIYAREVLDSRGNPTIEVEVYTESGAFGRGMVPSGASTGEYEAVELRDGDKARYLGKGVTKAVDNVNNIIAEAIIGYDVRDQMAIDKAMIDLDGTPNKGKLGANAILGVSIAVARAAADYLEVPLYHYLGGFNTKVLPTPMMNIINGGSHADNSIDFQEFMIMPVGAPTFKEALRMGAEVFHALASILKGRGLATSVGDEGGFAPNLGSNEEGFEVIIEAIEKAGYVPGKDVVLAMDAASSEFYDKEKGVYVLADSGEGEKTTEEMIAFYEELVSKYPIISIEDGLDENDWDGFKKLTEVLGDKVQLVGDDLFVTNTTKLAEGIEKGIANSILIKVNQIGTLTETFEAIEMAKEAGYTAVVSHRSGETEDSTISDIAVATNAGQIKTGSLSRTDRIAKYNQLLRIEDQLGDVAEYKGLKSFYNLKNK.

Residue Gln-163 participates in (2R)-2-phosphoglycerate binding. Residue Glu-205 is the Proton donor of the active site. Residues Asp-242, Glu-288, and Asp-315 each contribute to the Mg(2+) site. (2R)-2-phosphoglycerate-binding residues include Lys-340, Arg-369, Ser-370, and Lys-391. Residue Lys-340 is the Proton acceptor of the active site.

This sequence belongs to the enolase family. Mg(2+) is required as a cofactor.

The protein localises to the cytoplasm. The protein resides in the secreted. It is found in the cell surface. It carries out the reaction (2R)-2-phosphoglycerate = phosphoenolpyruvate + H2O. It participates in carbohydrate degradation; glycolysis; pyruvate from D-glyceraldehyde 3-phosphate: step 4/5. Functionally, catalyzes the reversible conversion of 2-phosphoglycerate (2-PG) into phosphoenolpyruvate (PEP). It is essential for the degradation of carbohydrates via glycolysis. This chain is Enolase, found in Enterococcus faecalis (strain ATCC 700802 / V583).